The sequence spans 122 residues: Hexon-interlacing protein (122 aa).

The stretch at 72 to 106 (VTELNESIDELQQKMTELEKRLKIMEEKIEEIKLA) forms a coiled coil.

It belongs to the adenoviridae hexon-interlacing protein family. Homotrimer. Interacts with hexon protein; this interaction tethers the hexons together. Self-interacts with adjacent proteins. Interacts with kinesin light chain KLC1; this interaction leads to capsid disruption at the nuclear pore complex during virus entry into host cell.

The protein resides in the virion. The protein localises to the host nucleus. Structural component of the virion that acts as a cement protein on the capsid exterior and forms triskelion structures consisting of three molecules that stabilize three hexon trimers at the center of each icosahedral facet and fixes the peripentonal hexons. Dispensable for assembly. During virus entry, recruits the anterograde motor kinesin-1 to the capsid docked at the nuclear pore complex thereby subjecting the docked capsid to a pulling force. The resulting tension leads to capsid disruption, dispersion of capsid fragments toward cell periphery and eventually viral DNA entry into the host nucleus. The protein is Hexon-interlacing protein of Tupaiidae (tree shrews).